The sequence spans 588 residues: Secreted triacylglycerol lipase LIP1 (588 aa).

The N-terminal stretch at 1 to 20 is a signal peptide; it reads MRFSGFVSGLGLGLLTAVSA. S258 functions as the Acyl-ester intermediate in the catalytic mechanism. N400 is a glycosylation site (N-linked (GlcNAc...) asparagine).

Belongs to the type-B carboxylesterase/lipase family.

It is found in the secreted. The enzyme catalyses a triacylglycerol + H2O = a diacylglycerol + a fatty acid + H(+). Its function is as follows. Secreted acylglycerol lipase required for efficient utilization of saturated triglyceride lipids. Is not involved in virulence. The polypeptide is Secreted triacylglycerol lipase LIP1 (Gibberella zeae (strain ATCC MYA-4620 / CBS 123657 / FGSC 9075 / NRRL 31084 / PH-1) (Wheat head blight fungus)).